The sequence spans 338 residues: Galactinol synthase 2 (338 aa).

Lys-105 is a catalytic residue. Positions 121, 123, and 258 each coordinate Mn(2+).

Belongs to the glycosyltransferase 8 family. Galactosyltransferase subfamily. Requires a divalent metal cation as cofactor.

The protein resides in the cytoplasm. The catalysed reaction is myo-inositol + UDP-alpha-D-galactose = alpha-D-galactosyl-(1-&gt;3)-1D-myo-inositol + UDP + H(+). Galactinol synthase involved in the biosynthesis of raffinose family oligosaccharides (RFOs) that function as osmoprotectants. May promote plant stress tolerance. In Solanum lycopersicum (Tomato), this protein is Galactinol synthase 2 (GOLS2).